Here is a 163-residue protein sequence, read N- to C-terminus: Lipoprotein signal peptidase (163 aa).

The next 4 helical transmembrane spans lie at 9 to 29 (AWPW…SKYL), 42 to 62 (ILPF…SFLG), 67 to 87 (WQII…ILWL), and 93 to 113 (SEIM…GNFI). Active-site residues include Asp-123 and Asp-141. A helical transmembrane segment spans residues 137-157 (FNVADSAICVGVFLLIVYMLL).

This sequence belongs to the peptidase A8 family.

It localises to the cell inner membrane. It carries out the reaction Release of signal peptides from bacterial membrane prolipoproteins. Hydrolyzes -Xaa-Yaa-Zaa-|-(S,diacylglyceryl)Cys-, in which Xaa is hydrophobic (preferably Leu), and Yaa (Ala or Ser) and Zaa (Gly or Ala) have small, neutral side chains.. The protein operates within protein modification; lipoprotein biosynthesis (signal peptide cleavage). In terms of biological role, this protein specifically catalyzes the removal of signal peptides from prolipoproteins. This chain is Lipoprotein signal peptidase, found in Coxiella burnetii (strain Dugway 5J108-111).